The following is a 1905-amino-acid chain: Bromodomain adjacent to zinc finger domain protein 2A (1905 aa).

Disordered regions lie at residues 1–59 (MEME…NGLS) and 362–434 (TSIF…PTTS). Composition is skewed to polar residues over residues 35–59 (TNGS…NGLS), 379–391 (LQDN…NGSD), and 399–420 (TQSS…STIQ). Phosphothreonine is present on threonine 507. Serine 509 is modified (phosphoserine). Residues 546–617 (IATPEEVRLP…EHFSFSPRMP (72 aa)) enclose the MBD domain. At threonine 548 the chain carries Phosphothreonine. Phosphoserine is present on serine 613. The disordered stretch occupies residues 648 to 792 (ITGKRGRPRN…KEKEEVTKAK (145 aa)). 2 consecutive DNA-binding regions (a.T hook) follow at residues 649-661 (TGKR…TEKA) and 670-682 (KRGR…VKIT). The segment covering 656–668 (RNTEKAKTKEVPK) has biased composition (basic and acidic residues). The span at 669 to 678 (VKRGRGRPPK) shows a compositional bias: basic residues. N6-acetyllysine; by KAT8 is present on lysine 680. Residues 686–709 (NKTDNRPLKKLEAQETLNEEDKAK) show a composition bias toward basic and acidic residues. Residues 693-792 (LKKLEAQETL…KEKEEVTKAK (100 aa)) adopt a coiled-coil conformation. Basic residues predominate over residues 710 to 721 (IAKSKKKMRQKV). Residues 725-734 (ECQTTIQGQA) are compositionally biased toward polar residues. Basic and acidic residues-rich tracts occupy residues 739-748 (KQETKSLKQK) and 756-792 (AEKE…TKAK). Lysine 799 carries the N6-acetyllysine modification. The region spanning 848-913 (SGAFSDCLTI…LKAALHDPGF (66 aa)) is the DDT domain. Residue lysine 866 forms a Glycyl lysine isopeptide (Lys-Gly) (interchain with G-Cter in SUMO2) linkage. Serine 1051 is modified (phosphoserine). Glycyl lysine isopeptide (Lys-Gly) (interchain with G-Cter in SUMO2) cross-links involve residues lysine 1150 and lysine 1172. Disordered stretches follow at residues 1178–1220 (SNTT…PQAQ), 1283–1318 (LSSS…SSPD), and 1330–1412 (MPCN…RPPS). The residue at position 1184 (serine 1184) is a Phosphoserine. Positions 1186–1198 (ARARGRPRKTKPG) form a DNA-binding region, a.T hook 3. Low complexity predominate over residues 1283–1293 (LSSSVLTPDSS). A compositionally biased stretch (acidic residues) spans 1306 to 1315 (EEPEPDEAES). Positions 1345–1359 (DQPTPSPQQLASSKP) are enriched in polar residues. At serine 1397 the chain carries Phosphoserine. The segment at residues 1404–1416 (PKRRGRPPSKFFK) is a DNA-binding region (a.T hook 4). Phosphoserine is present on serine 1559. Glycyl lysine isopeptide (Lys-Gly) (interchain with G-Cter in SUMO2) cross-links involve residues lysine 1676 and lysine 1709. The segment at 1676 to 1726 (KVTCLVCRKGDNDEFLLLCDGCDRGCHIYCHRPKMEAVPEGDWFCTVCLAQ) adopts a PHD-type zinc-finger fold. Disordered stretches follow at residues 1734 to 1755 (QKPG…NFSE) and 1769 to 1789 (ESPA…KRRR). Residues serine 1747, serine 1770, serine 1783, and serine 1785 each carry the phosphoserine modification. One can recognise a Bromo domain in the interval 1793–1897 (RNHHSDLTFC…RFFESRWEEF (105 aa)).

Belongs to the WAL family. As to quaternary structure, component of the NoRC-1 ISWI chromatin remodeling complex at least composed of SMARCA1 and BAZ2A/TIP5, which regulates the spacing of histone octamers on the DNA template to facilitate access to DNA. Within the NoRC-1 ISWI chromatin remodeling complex interacts with SMARCA1; the interaction is direct. Component of the NoRC-5 ISWI chromatin remodeling complex (also called the NoRC nucleolar-remodeling complex), at least composed of SMARCA5/SNF2H and BAZ2A/TIP5, which regulates the spacing of histone octamers on the DNA template to facilitate access to DNA. Within the NoRC-5 ISWI chromatin remodeling complexes interacts with SMARCA5/SNF2H; the interaction is direct. Interacts with TTF1; the interaction is required for recruitment of the NoRC-5 ISWI chromatin remodeling complex to rDNA. Interacts with HDAC1. Interacts with SIN3A. Interacts with DNMT1 and DNM3B. Interacts with BEND3 and USP21. Acetylation at Lys-680 by KAT8/MOF promotes its dissociation from pRNA, affecting heterochromatin formation, nucleosome positioning and rDNA silencing. Deacetylation by SIRT1 in late S phase enhances pRNA-binding, allowing de novo DNA methylation and heterochromatin formation. Acetylation is high during S phase and declines to background levels in late S phase when the silent copies of rRNA genes are replicated. In terms of processing, ubiquitinated. Deubiquitinated by USP21 leading to its stabilization. In terms of tissue distribution, expressed at moderate levels in most tissues analyzed, including heart, brain, placenta, lung, skeletal muscle, kidney and pancreas.

Its subcellular location is the nucleus. The protein localises to the nucleolus. Its function is as follows. Regulatory subunit of the ATP-dependent NoRC-1 and NoRC-5 ISWI chromatin remodeling complexes, which form ordered nucleosome arrays on chromatin and facilitate access to DNA during DNA-templated processes such as DNA replication, transcription, and repair. Both complexes regulate the spacing of nucleosomes along the chromatin and have the ability to slide mononucleosomes to the center of a DNA template. Directly stimulates the ATPase activity of SMARCA5 in the NoRC-5 ISWI chromatin remodeling complex. The NoRC-1 ISWI chromatin remodeling complex has a lower ATP hydrolysis rate than the NoRC-5 ISWI chromatin remodeling complex. Within the NoRC-5 ISWI chromatin remodeling complex, mediates silencing of a fraction of rDNA by recruiting histone-modifying enzymes and DNA methyltransferases, leading to heterochromatin formation and transcriptional silencing. In the complex, it plays a central role by being recruited to rDNA and by targeting chromatin modifying enzymes such as HDAC1, leading to repress RNA polymerase I transcription. Recruited to rDNA via its interaction with TTF1 and its ability to recognize and bind histone H4 acetylated on 'Lys-16' (H4K16ac), leading to deacetylation of H4K5ac, H4K8ac, H4K12ac but not H4K16ac. Specifically binds pRNAs, 150-250 nucleotide RNAs that are complementary in sequence to the rDNA promoter; pRNA-binding is required for heterochromatin formation and rDNA silencing. The chain is Bromodomain adjacent to zinc finger domain protein 2A (BAZ2A) from Homo sapiens (Human).